We begin with the raw amino-acid sequence, 357 residues long: DNA replication and repair protein RecF (357 aa).

30-37 is an ATP binding site; that stretch reads GANGSGKT.

It belongs to the RecF family.

The protein resides in the cytoplasm. In terms of biological role, the RecF protein is involved in DNA metabolism; it is required for DNA replication and normal SOS inducibility. RecF binds preferentially to single-stranded, linear DNA. It also seems to bind ATP. This Salmonella agona (strain SL483) protein is DNA replication and repair protein RecF.